Here is a 462-residue protein sequence, read N- to C-terminus: uncharacterized protein (462 aa).

The disordered stretch occupies residues 405–462; it reads QPIGNNKSSPMKREFTAMEEDKTETGDIFKLLSQQKPAKGAKSKSKKYKKTEEDLSAV. Positions 415 to 431 are enriched in basic and acidic residues; it reads MKREFTAMEEDKTETGD. Over residues 443-453 the composition is skewed to basic residues; the sequence is KGAKSKSKKYK.

This is an uncharacterized protein from Magallana gigas (Pacific oyster).